The chain runs to 446 residues: Methionine aminopeptidase 2-1 (446 aa).

The interval 1-88 (MAAQVTPELA…PPRVILSSIF (88 aa)) is disordered. The segment covering 32 to 44 (ENEDVESDDDNEG) has biased composition (acidic residues). The span at 57 to 72 (AKKKKKKKPKKKKKGG) shows a compositional bias: basic residues. Position 196 (His196) interacts with substrate. A divalent metal cation contacts are provided by Asp216, Asp227, and His296. Substrate is bound at residue His304. Positions 332 and 427 each coordinate a divalent metal cation.

It belongs to the peptidase M24A family. Methionine aminopeptidase eukaryotic type 2 subfamily. The cofactor is Co(2+). Zn(2+) is required as a cofactor. It depends on Mn(2+) as a cofactor. Requires Fe(2+) as cofactor.

The protein localises to the cytoplasm. It carries out the reaction Release of N-terminal amino acids, preferentially methionine, from peptides and arylamides.. Functionally, cotranslationally removes the N-terminal methionine from nascent proteins. The N-terminal methionine is often cleaved when the second residue in the primary sequence is small and uncharged (Met-Ala-, Cys, Gly, Pro, Ser, Thr, or Val). The polypeptide is Methionine aminopeptidase 2-1 (Blastomyces gilchristii (strain SLH14081) (Blastomyces dermatitidis)).